The following is a 373-amino-acid chain: Sterol 24-C-methyltransferase (373 aa).

This sequence belongs to the class I-like SAM-binding methyltransferase superfamily. Erg6/SMT family.

The catalysed reaction is zymosterol + S-adenosyl-L-methionine = fecosterol + S-adenosyl-L-homocysteine + H(+). The protein operates within steroid metabolism; ergosterol biosynthesis; ergosterol from zymosterol: step 1/5. Its function is as follows. Catalyzes the methyl transfer from S-adenosyl-methionine to the C-24 of zymosterol to form fecosterol. The polypeptide is Sterol 24-C-methyltransferase (ERG6) (Eremothecium gossypii (strain ATCC 10895 / CBS 109.51 / FGSC 9923 / NRRL Y-1056) (Yeast)).